We begin with the raw amino-acid sequence, 279 residues long: Acyl-[acyl-carrier-protein]--UDP-N-acetylglucosamine O-acyltransferase (279 aa).

The protein belongs to the transferase hexapeptide repeat family. LpxA subfamily. As to quaternary structure, homotrimer.

It is found in the cytoplasm. The catalysed reaction is a (3R)-hydroxyacyl-[ACP] + UDP-N-acetyl-alpha-D-glucosamine = a UDP-3-O-[(3R)-3-hydroxyacyl]-N-acetyl-alpha-D-glucosamine + holo-[ACP]. It participates in glycolipid biosynthesis; lipid IV(A) biosynthesis; lipid IV(A) from (3R)-3-hydroxytetradecanoyl-[acyl-carrier-protein] and UDP-N-acetyl-alpha-D-glucosamine: step 1/6. Its function is as follows. Involved in the biosynthesis of lipid A, a phosphorylated glycolipid that anchors the lipopolysaccharide to the outer membrane of the cell. In Chlamydia pneumoniae (Chlamydophila pneumoniae), this protein is Acyl-[acyl-carrier-protein]--UDP-N-acetylglucosamine O-acyltransferase.